The sequence spans 156 residues: ATP synthase subunit b (156 aa).

Residues 7 to 26 (LIGQLIAFALFVAFCMKYVW) form a helical membrane-spanning segment.

Belongs to the ATPase B chain family. As to quaternary structure, F-type ATPases have 2 components, F(1) - the catalytic core - and F(0) - the membrane proton channel. F(1) has five subunits: alpha(3), beta(3), gamma(1), delta(1), epsilon(1). F(0) has three main subunits: a(1), b(2) and c(10-14). The alpha and beta chains form an alternating ring which encloses part of the gamma chain. F(1) is attached to F(0) by a central stalk formed by the gamma and epsilon chains, while a peripheral stalk is formed by the delta and b chains.

The protein resides in the cell inner membrane. Its function is as follows. F(1)F(0) ATP synthase produces ATP from ADP in the presence of a proton or sodium gradient. F-type ATPases consist of two structural domains, F(1) containing the extramembraneous catalytic core and F(0) containing the membrane proton channel, linked together by a central stalk and a peripheral stalk. During catalysis, ATP synthesis in the catalytic domain of F(1) is coupled via a rotary mechanism of the central stalk subunits to proton translocation. Component of the F(0) channel, it forms part of the peripheral stalk, linking F(1) to F(0). The polypeptide is ATP synthase subunit b (Haemophilus ducreyi (strain 35000HP / ATCC 700724)).